We begin with the raw amino-acid sequence, 923 residues long: MTEPRIETEQDATRPLRDDIRFLGGVLGDTIRDHEGPEVFDLIERVRIEAFRVRREEVGRSAVAEMLRGVDIAVALPLIRAFSYFVLLANLAEDIQRDRRRAVHVAAGEPPQDSSLAATYRKLDAAALDAAAVADLLSDALVSPVITAHPTETRRRTVFDAQTRITELMRARQRATDPAERAALESRIRRQVLSLWRTALIRLARLRIQDEIAVGLRYYELTLFDVIPAINAEVRAALRARWPGADLLARPILRPGSWIGGDRDGNPYVTAEVVRHAATQAAGVALRRYLAELVELAKTLSLSARLVPVTPRVAELAAAGYPDPATHGDEPYRRALHHIRVRLSATADRVLDAPVPEAVAEPDAQPYAGPREFLDDLDAIDASLRASGDGLLADDRLAALRHAVETFGFHLQGLDMRQNSEVHEQVVAELLAWAGVHPAYGDLPEDARVELLAAELRTRRPLLGPHARLSEQAAKEVGIVRAAKQVVDTFGPEAVPNYIISMCTSVSDMLEAALLLKEGGLLDPGAPEGSPSCTVNIVPLFETIEDLGAGAATLAAALEVPVYRELVAAAGMRQEVMLGYSDSNKDGGYLAANWALYRAELDLVEVARKTGIRLRLFHGRGGTVGRGGGRSYDAILAQPAGAVRGALRLTEQGEVIAAKYAEPGAAHRNLESLIAGTLESTLLDVEGLGADAEPAYELMDELAALARAAYARLVHETPGFVEYFRQSTPVAEVGDLNIGSRPASRKPTNSVSDLRAIPWVMAWSQARVMLPGWYGTGAALEEWVGGDPGRLARLTDLYRRWPFFRTVLSNLAQVMAKSDLDIAARYAELVDDAALRDQIFGMIREEHARTLRMHAAITGHDQLLADNRSLAESIHNRFPYLEPLNQMQVELLRRLRSGDDSELVKRGILLTMNGLATALRNSG.

Catalysis depends on residues His-149 and Lys-585.

Belongs to the PEPCase type 1 family. Mg(2+) is required as a cofactor.

It carries out the reaction oxaloacetate + phosphate = phosphoenolpyruvate + hydrogencarbonate. Forms oxaloacetate, a four-carbon dicarboxylic acid source for the tricarboxylic acid cycle. In Nocardia farcinica (strain IFM 10152), this protein is Phosphoenolpyruvate carboxylase.